A 437-amino-acid chain; its full sequence is Protein arginine methyltransferase NDUFAF7, mitochondrial (437 aa).

Residues 1 to 42 (MSGLARLQRLQKFGFLMVSASANRPIQRYQCSRTEKPQKRTS) constitute a mitochondrion transit peptide.

It belongs to the NDUFAF7 family.

It is found in the mitochondrion. The enzyme catalyses L-arginyl-[protein] + 2 S-adenosyl-L-methionine = N(omega),N(omega)'-dimethyl-L-arginyl-[protein] + 2 S-adenosyl-L-homocysteine + 2 H(+). Arginine methyltransferase involved in the assembly or stability of mitochondrial NADH:ubiquinone oxidoreductase complex (complex I). Acts by mediating symmetric dimethylation of 'Arg-118' of ndufs2 after it assembles into the complex I, stabilizing the early intermediate complex. This Xenopus laevis (African clawed frog) protein is Protein arginine methyltransferase NDUFAF7, mitochondrial.